A 313-amino-acid chain; its full sequence is Homoserine O-succinyltransferase (313 aa).

The Acyl-thioester intermediate role is filled by Cys142. The substrate site is built by Lys163 and Ser192. The active-site Proton acceptor is His235. The active site involves Glu237. A substrate-binding site is contributed by Arg249.

It belongs to the MetA family.

The protein localises to the cytoplasm. It catalyses the reaction L-homoserine + succinyl-CoA = O-succinyl-L-homoserine + CoA. It participates in amino-acid biosynthesis; L-methionine biosynthesis via de novo pathway; O-succinyl-L-homoserine from L-homoserine: step 1/1. Transfers a succinyl group from succinyl-CoA to L-homoserine, forming succinyl-L-homoserine. The chain is Homoserine O-succinyltransferase from Vibrio vulnificus (strain YJ016).